The primary structure comprises 438 residues: Glutamine synthetase (438 aa).

The 85-residue stretch at 14-98 folds into the GS beta-grasp domain; it reads EEVEYVDIRF…VHCNVVEPDT (85 aa). Positions 106-438 constitute a GS catalytic domain; the sequence is PRIALKAEAY…LAGDVFTKDQ (333 aa). Residues Glu-130 and Glu-132 each contribute to the Mg(2+) site. Asp-208 provides a ligand contact to ATP. Mg(2+) contacts are provided by Glu-213 and Glu-220. Residues 264–265 and Gly-265 each bind L-glutamate; that span reads NG. His-269 is a Mg(2+) binding site. Residues 271–273 and Ser-273 contribute to the ATP site; that span reads NMS. 3 residues coordinate L-glutamate: Arg-321, Glu-327, and Arg-339. The ATP site is built by Arg-339, Arg-344, and Lys-352. Glu-357 contributes to the Mg(2+) binding site. An L-glutamate-binding site is contributed by Arg-359. An O-AMP-tyrosine modification is found at Tyr-397.

It belongs to the glutamine synthetase family. In terms of assembly, oligomer of 12 subunits arranged in the form of two hexameric ring. The cofactor is Mg(2+).

It localises to the cytoplasm. The enzyme catalyses L-glutamate + NH4(+) + ATP = L-glutamine + ADP + phosphate + H(+). Its activity is regulated as follows. The activity of this enzyme could be controlled by adenylation under conditions of abundant glutamine. Its function is as follows. Catalyzes the ATP-dependent biosynthesis of glutamine from glutamate and ammonia. This is Glutamine synthetase from Rhodobacter capsulatus (Rhodopseudomonas capsulata).